We begin with the raw amino-acid sequence, 123 residues long: Alpha-lactalbumin B/C (123 aa).

Positions 1–123 constitute a C-type lysozyme domain; sequence KQFTKCQLSQ…KLEQWLCEEL (123 aa). Cystine bridges form between cysteine 6–cysteine 120, cysteine 28–cysteine 111, cysteine 61–cysteine 77, and cysteine 73–cysteine 91. Residues lysine 79, aspartate 82, aspartate 84, aspartate 87, and aspartate 88 each contribute to the Ca(2+) site.

It belongs to the glycosyl hydrolase 22 family. Lactose synthase (LS) is a heterodimer of a catalytic component, beta1,4-galactosyltransferase (beta4Gal-T1) and a regulatory component, alpha-lactalbumin (LA). As to expression, mammary gland specific. Secreted in milk.

It is found in the secreted. Functionally, regulatory subunit of lactose synthase, changes the substrate specificity of galactosyltransferase in the mammary gland making glucose a good acceptor substrate for this enzyme. This enables LS to synthesize lactose, the major carbohydrate component of milk. In other tissues, galactosyltransferase transfers galactose onto the N-acetylglucosamine of the oligosaccharide chains in glycoproteins. This Equus caballus (Horse) protein is Alpha-lactalbumin B/C.